Consider the following 592-residue polypeptide: Bifunctional enzyme BirA/CoaX (592 aa).

The biotin--protein ligase stretch occupies residues 1–329 (MTVLKLSHWR…ISLRSDDRPV (329 aa)). The BPL/LPL catalytic domain maps to 83 to 259 (QTALKHECAS…ELDAVLLQYA (177 aa)). Residues 336–592 (DSERFLLLDG…AAEGREYEHI (257 aa)) form a type III pantothenate kinase region. Residue 344–351 (DGGNSRLK) coordinates ATP. Residues Tyr-426 and 433-436 (GSDR) contribute to the substrate site. The active-site Proton acceptor is Asp-435. Thr-458 lines the ATP pocket. Thr-508 serves as a coordination point for substrate.

This sequence in the N-terminal section; belongs to the biotin--protein ligase family. The protein in the C-terminal section; belongs to the type III pantothenate kinase family. It depends on NH4(+) as a cofactor. The cofactor is K(+).

Its subcellular location is the cytoplasm. It catalyses the reaction biotin + L-lysyl-[protein] + ATP = N(6)-biotinyl-L-lysyl-[protein] + AMP + diphosphate + H(+). The catalysed reaction is (R)-pantothenate + ATP = (R)-4'-phosphopantothenate + ADP + H(+). It functions in the pathway cofactor biosynthesis; coenzyme A biosynthesis; CoA from (R)-pantothenate: step 1/5. Activates biotin to form biotinyl-5'-adenylate and transfers the biotin moiety to biotin-accepting proteins. In terms of biological role, catalyzes the phosphorylation of pantothenate (Pan), the first step in CoA biosynthesis. This is Bifunctional enzyme BirA/CoaX (birA/coaX) from Neisseria meningitidis serogroup B (strain ATCC BAA-335 / MC58).